Here is a 495-residue protein sequence, read N- to C-terminus: ESX-2 secretion system ATPase EccB2 (495 aa).

A helical transmembrane segment spans residues 43 to 63 (LALSMVLVAIAAGWMMLLNVL).

Belongs to the EccB family. As to quaternary structure, part of the ESX-2 / type VII secretion system (T7SS), which is composed of cytosolic and membrane components.

The protein localises to the cell membrane. Functionally, an ATPase. This Mycobacterium tuberculosis (strain CDC 1551 / Oshkosh) protein is ESX-2 secretion system ATPase EccB2 (eccB2).